We begin with the raw amino-acid sequence, 55 residues long: Accessory gland-specific peptide 70A (55 aa).

A signal peptide spans 1–19 (MKTLSLFLVLVCLLGLVQS). 4 positions are modified to hydroxyproline: proline 28, proline 32, proline 34, and proline 38. Cysteine 43 and cysteine 55 are oxidised to a cystine.

As to expression, main cells of the accessory glands of males (paragonial gland).

It localises to the secreted. Represses female sexual receptivity and stimulates oviposition. This is Accessory gland-specific peptide 70A (Acp70A) from Drosophila mauritiana (Fruit fly).